We begin with the raw amino-acid sequence, 242 residues long: Biosynthetic peptidoglycan transglycosylase (242 aa).

A helical transmembrane segment spans residues 19 to 39 (LMVVLAVFWGGGIALFSVAPV).

This sequence belongs to the glycosyltransferase 51 family.

It localises to the cell inner membrane. It catalyses the reaction [GlcNAc-(1-&gt;4)-Mur2Ac(oyl-L-Ala-gamma-D-Glu-L-Lys-D-Ala-D-Ala)](n)-di-trans,octa-cis-undecaprenyl diphosphate + beta-D-GlcNAc-(1-&gt;4)-Mur2Ac(oyl-L-Ala-gamma-D-Glu-L-Lys-D-Ala-D-Ala)-di-trans,octa-cis-undecaprenyl diphosphate = [GlcNAc-(1-&gt;4)-Mur2Ac(oyl-L-Ala-gamma-D-Glu-L-Lys-D-Ala-D-Ala)](n+1)-di-trans,octa-cis-undecaprenyl diphosphate + di-trans,octa-cis-undecaprenyl diphosphate + H(+). Its pathway is cell wall biogenesis; peptidoglycan biosynthesis. In terms of biological role, peptidoglycan polymerase that catalyzes glycan chain elongation from lipid-linked precursors. This is Biosynthetic peptidoglycan transglycosylase from Escherichia coli O157:H7.